The chain runs to 156 residues: ATP synthase subunit b (156 aa).

The chain crosses the membrane as a helical span at residues 3 to 23 (ITLTIFAQALAFAGLIWIVAT).

The protein belongs to the ATPase B chain family. In terms of assembly, F-type ATPases have 2 components, F(1) - the catalytic core - and F(0) - the membrane proton channel. F(1) has five subunits: alpha(3), beta(3), gamma(1), delta(1), epsilon(1). F(0) has three main subunits: a(1), b(2) and c(10-14). The alpha and beta chains form an alternating ring which encloses part of the gamma chain. F(1) is attached to F(0) by a central stalk formed by the gamma and epsilon chains, while a peripheral stalk is formed by the delta and b chains.

The protein localises to the cell inner membrane. In terms of biological role, f(1)F(0) ATP synthase produces ATP from ADP in the presence of a proton or sodium gradient. F-type ATPases consist of two structural domains, F(1) containing the extramembraneous catalytic core and F(0) containing the membrane proton channel, linked together by a central stalk and a peripheral stalk. During catalysis, ATP synthesis in the catalytic domain of F(1) is coupled via a rotary mechanism of the central stalk subunits to proton translocation. Component of the F(0) channel, it forms part of the peripheral stalk, linking F(1) to F(0). The polypeptide is ATP synthase subunit b (Xanthomonas axonopodis pv. citri (strain 306)).